The primary structure comprises 213 residues: Dimethylamine corrinoid protein (213 aa).

Residues 1-90 (MSKEELLQEL…LMPEGASGSK (90 aa)) enclose the B12-binding N-terminal domain. The 123-residue stretch at 91-213 (LGVIVNGTVE…AVAKAKELLA (123 aa)) folds into the B12-binding domain. His104 lines the methylcob(III)alamin pocket.

It belongs to the methylamine corrinoid protein family. In terms of assembly, copurifies with MtbA.

Its pathway is one-carbon metabolism; methanogenesis from dimethylamine. Functionally, acts as a methyl group carrier between MtbB1 and MtbA. Binds 1 corrinoid cofactor per protein, is subsequently demethylated by MtbA. In Methanosarcina barkeri, this protein is Dimethylamine corrinoid protein.